Reading from the N-terminus, the 612-residue chain is Isocitrate dehydrogenase kinase/phosphatase (612 aa).

ATP-binding positions include 327–333 (APGIKGL) and Lys-348. Asp-383 is a catalytic residue. Residues 593–612 (AGRASPEPDAPADARSVRVA) are disordered.

This sequence belongs to the AceK family.

The protein resides in the cytoplasm. It catalyses the reaction L-seryl-[isocitrate dehydrogenase] + ATP = O-phospho-L-seryl-[isocitrate dehydrogenase] + ADP + H(+). Its function is as follows. Bifunctional enzyme which can phosphorylate or dephosphorylate isocitrate dehydrogenase (IDH) on a specific serine residue. This is a regulatory mechanism which enables bacteria to bypass the Krebs cycle via the glyoxylate shunt in response to the source of carbon. When bacteria are grown on glucose, IDH is fully active and unphosphorylated, but when grown on acetate or ethanol, the activity of IDH declines drastically concomitant with its phosphorylation. The chain is Isocitrate dehydrogenase kinase/phosphatase from Paraburkholderia phytofirmans (strain DSM 17436 / LMG 22146 / PsJN) (Burkholderia phytofirmans).